Reading from the N-terminus, the 235-residue chain is Ribosomal RNA small subunit methyltransferase G (235 aa).

Residues G74, F79, 97–99 (EAT), 125–126 (AE), and R144 each bind S-adenosyl-L-methionine.

Belongs to the methyltransferase superfamily. RNA methyltransferase RsmG family.

The protein resides in the cytoplasm. Its function is as follows. Specifically methylates the N7 position of a guanine in 16S rRNA. The protein is Ribosomal RNA small subunit methyltransferase G of Dehalococcoides mccartyi (strain ATCC BAA-2100 / JCM 16839 / KCTC 5957 / BAV1).